Reading from the N-terminus, the 215-residue chain is Uridine kinase (215 aa).

16–23 provides a ligand contact to ATP; that stretch reads GASASGKS.

This sequence belongs to the uridine kinase family.

The protein localises to the cytoplasm. The catalysed reaction is uridine + ATP = UMP + ADP + H(+). It catalyses the reaction cytidine + ATP = CMP + ADP + H(+). Its pathway is pyrimidine metabolism; CTP biosynthesis via salvage pathway; CTP from cytidine: step 1/3. It functions in the pathway pyrimidine metabolism; UMP biosynthesis via salvage pathway; UMP from uridine: step 1/1. The chain is Uridine kinase from Aliivibrio fischeri (strain ATCC 700601 / ES114) (Vibrio fischeri).